The following is a 573-amino-acid chain: Potassium-transporting ATPase potassium-binding subunit (573 aa).

Transmembrane regions (helical) follow at residues 6 to 26, 66 to 86, 135 to 155, 177 to 197, 257 to 277, 283 to 303, 382 to 402, 428 to 448, 493 to 513, and 537 to 557; these read ILFALFIVTIALITKPLGSYI, FFSLVSFSVMAFIFVLVILLL, ALAVQNFVSAAVGLCVAIALI, IFWILLPISIVIAIVYIFQGV, IQMVSIFAIAAALTYTFGKWV, GWLIFGVMLVLFIISLVVMTI, IFGGVGAGFYGFFMFLMLAVF, MFALLISPCCVLVFTGLAAVI, ITIALSMLIGRFGVIFAVIML, and FIFAILVFFTILLIGGLTIFP.

The protein belongs to the KdpA family. The system is composed of three essential subunits: KdpA, KdpB and KdpC.

Its subcellular location is the cell inner membrane. In terms of biological role, part of the high-affinity ATP-driven potassium transport (or Kdp) system, which catalyzes the hydrolysis of ATP coupled with the electrogenic transport of potassium into the cytoplasm. This subunit binds the periplasmic potassium ions and delivers the ions to the membrane domain of KdpB through an intramembrane tunnel. The sequence is that of Potassium-transporting ATPase potassium-binding subunit from Francisella tularensis subsp. novicida (strain U112).